Here is a 146-residue protein sequence, read N- to C-terminus: MKHIEIYTDGSCLNNPGFGGWAYILRYKEYQKEGFGAEANTTNNRMELMAIIESLKALKEPCEISLFTDSNLMVQSINEWLEGWIKKDFKGKKNIDLWKEYIKVAKSHKIKAFWVKAHNGHLENERCDTLAREAALKIARENDEKH.

The 136-residue stretch at 1–136 (MKHIEIYTDG…CDTLAREAAL (136 aa)) folds into the RNase H type-1 domain. Mg(2+) is bound by residues aspartate 9, glutamate 47, aspartate 69, and aspartate 128.

The protein belongs to the RNase H family. In terms of assembly, monomer. The cofactor is Mg(2+).

The protein localises to the cytoplasm. It carries out the reaction Endonucleolytic cleavage to 5'-phosphomonoester.. In terms of biological role, endonuclease that specifically degrades the RNA of RNA-DNA hybrids. This chain is Ribonuclease H, found in Campylobacter jejuni subsp. jejuni serotype O:23/36 (strain 81-176).